The following is a 149-amino-acid chain: uncharacterized protein (149 aa).

2 disordered regions span residues 24-74 (TSQG…NDLE) and 129-149 (AIQD…PRAP). Over residues 28 to 42 (EDVKPEPKPEVDEKV) the composition is skewed to basic and acidic residues. Residues 102-131 (SELESLKEKVSSATSMEELREIMEEFRAIQ) are a coiled coil.

This is an uncharacterized protein from Archaeoglobus fulgidus (strain ATCC 49558 / DSM 4304 / JCM 9628 / NBRC 100126 / VC-16).